A 544-amino-acid polypeptide reads, in one-letter code: Chaperonin GroEL (544 aa).

ATP is bound by residues 29-32 (TLGP), 86-90 (DGTTT), Gly413, 478-480 (NAA), and Asp494.

It belongs to the chaperonin (HSP60) family. Forms a cylinder of 14 subunits composed of two heptameric rings stacked back-to-back. Interacts with the co-chaperonin GroES.

It localises to the cytoplasm. It carries out the reaction ATP + H2O + a folded polypeptide = ADP + phosphate + an unfolded polypeptide.. Together with its co-chaperonin GroES, plays an essential role in assisting protein folding. The GroEL-GroES system forms a nano-cage that allows encapsulation of the non-native substrate proteins and provides a physical environment optimized to promote and accelerate protein folding. The chain is Chaperonin GroEL from Lysinibacillus sphaericus (strain C3-41).